We begin with the raw amino-acid sequence, 81 residues long: uncharacterized protein (81 aa).

The 45-residue stretch at 1-45 (MRTTIDVAGRLVIPKRIRERLGLRGNDQVEITERDGRIEIEPAPT) folds into the SpoVT-AbrB domain.

To B.subtilis SpoVT.

This is an uncharacterized protein from Mycobacterium bovis (strain ATCC BAA-935 / AF2122/97).